The primary structure comprises 382 residues: Sphingosine 1-phosphate receptor 1 (382 aa).

The Extracellular portion of the chain corresponds to 1–46; that stretch reads MGSTRIPLVKALHSPVSDYVNYDIIVRHYNYTGKLKISADKDNGIK. Lys-10 is modified (N6-acetyllysine). The N-linked (GlcNAc...) asparagine glycan is linked to Asn-30. A helical transmembrane segment spans residues 47–68; the sequence is LISVVFILICCFIILENIFVLL. Over 69–82 the chain is Cytoplasmic; the sequence is TIWKTKKFHRPMYY. Residues 83–104 form a helical membrane-spanning segment; that stretch reads FIGNLALSDLLAGVAYTANLLL. Over 105–116 the chain is Extracellular; that stretch reads SGATTYKLTPAQ. The helical transmembrane segment at 117–138 threads the bilayer; it reads WFLREGSMFVALSASVFSLLAI. 120–121 lines the sphing-4-enine 1-phosphate pocket; it reads RE. Residues 139-160 are Cytoplasmic-facing; the sequence is AIERYITMLKMKLHNGSNRFRS. Residues 161 to 182 traverse the membrane as a helical segment; that stretch reads FLLISACWVISLILGGLPIMGW. Residues 183 to 196 are Extracellular-facing; it reads NCISTLPSCSTVLP. Cys-184 and Cys-191 form a disulfide bridge. The helical transmembrane segment at 197 to 224 threads the bilayer; the sequence is LYHKHYILFCTTVFTLLLLSIVILYCRI. Topologically, residues 225–257 are cytoplasmic; the sequence is YSLVRTRSRRLTFRKNISKASRSSEKSLALLKT. A Phosphothreonine; by PKB/AKT1 modification is found at Thr-236. Residues 258-278 traverse the membrane as a helical segment; that stretch reads VIIVLGVFIACWAPLFILLLL. Residue 265-269 participates in sphing-4-enine 1-phosphate binding; that stretch reads FIACW. The Extracellular segment spans residues 279 to 289; the sequence is DVGCKVKTCDI. A disulfide bond links Cys-282 and Cys-287. The helical transmembrane segment at 290 to 310 threads the bilayer; the sequence is LFRTEYFLVLAVLNSGTNPII. Residues 311 to 382 are Cytoplasmic-facing; that stretch reads YTLSNKEMRR…MSSGNVNSSS (72 aa). The S-palmitoyl cysteine moiety is linked to residue Cys-328. Residues 349 to 382 form a disordered region; that stretch reads EFSRSKSDNSSHPQKDDGDNPETIMSSGNVNSSS. Residues Ser-351 and Ser-353 each carry the phosphoserine modification. Positions 351-366 are enriched in basic and acidic residues; sequence SRSKSDNSSHPQKDDG. Residues 371-382 are compositionally biased toward polar residues; it reads TIMSSGNVNSSS.

This sequence belongs to the G-protein coupled receptor 1 family. Interacts with GNAI1 and GNAI3. Interacts with CD69; this interaction promotes S1PR1 degradation. S1P-induced endothelial cell migration requires the PKB/AKT1-mediated phosphorylation of the third intracellular loop at the Thr-236 residue. In terms of processing, palmitoylated by ZDHHC5. Palmitoylation is required for targeting to plasma membrane, enabling G(i) coupling.

Its subcellular location is the cell membrane. It is found in the endosome. It localises to the membrane raft. Functionally, G-protein coupled receptor for the bioactive lysosphingolipid sphingosine 1-phosphate (S1P) that seems to be coupled to the G(i) subclass of heteromeric G proteins. Signaling leads to the activation of RAC1, SRC, PTK2/FAK1 and MAP kinases. Plays an important role in cell migration, probably via its role in the reorganization of the actin cytoskeleton and the formation of lamellipodia in response to stimuli that increase the activity of the sphingosine kinase SPHK1. Required for normal chemotaxis toward sphingosine 1-phosphate. Required for normal embryonic heart development and normal cardiac morphogenesis. Plays an important role in the regulation of sprouting angiogenesis and vascular maturation. Inhibits sprouting angiogenesis to prevent excessive sprouting during blood vessel development. Required for normal egress of mature T-cells from the thymus into the blood stream and into peripheral lymphoid organs. Plays a role in the migration of osteoclast precursor cells, the regulation of bone mineralization and bone homeostasis. Plays a role in responses to oxidized 1-palmitoyl-2-arachidonoyl-sn-glycero-3-phosphocholine by pulmonary endothelial cells and in the protection against ventilator-induced lung injury. The sequence is that of Sphingosine 1-phosphate receptor 1 (S1PR1) from Bos taurus (Bovine).